Reading from the N-terminus, the 400-residue chain is Inositol polyphosphate 1-phosphatase (400 aa).

A Li(+)-binding site is contributed by aspartate 54. Position 79 (glutamate 79) interacts with Mg(2+). Glutamate 80 contributes to the Li(+) binding site. Positions 153 and 155 each coordinate Mg(2+). The 1D-myo-inositol 1,4-bisphosphate site is built by aspartate 156, serine 157, and threonine 158. Over residues 238-257 (STRSNSEAQSQGTQNPSSEG) the composition is skewed to polar residues. Residues 238–258 (STRSNSEAQSQGTQNPSSEGS) are disordered. Residues serine 268, lysine 270, glycine 290, alanine 291, lysine 294, and threonine 312 each contribute to the 1D-myo-inositol 1,4-bisphosphate site. Aspartate 317 provides a ligand contact to Mg(2+). The residue at position 318 (serine 318) is a Phosphoserine.

The protein belongs to the inositol monophosphatase superfamily. As to quaternary structure, monomer. The cofactor is Mg(2+).

It catalyses the reaction 1D-myo-inositol 1,4-bisphosphate + H2O = 1D-myo-inositol 4-phosphate + phosphate. The enzyme catalyses 1D-myo-inositol 1,3,4-trisphosphate + H2O = 1D-myo-inositol 3,4-bisphosphate + phosphate. Its pathway is signal transduction; phosphatidylinositol signaling pathway. Its activity is regulated as follows. Inhibited by Li(+). Its function is as follows. Mg(2+)-dependent phosphatase that catalyzes the hydrolysis of the 1-position phosphate from inositol 1,4-bisphosphate and inositol 1,3,4-trisphosphate and participates in inositol phosphate metabolism. This is Inositol polyphosphate 1-phosphatase from Bos taurus (Bovine).